Here is a 1017-residue protein sequence, read N- to C-terminus: Voltage-gated delayed rectifier potassium channel KCNH4 (1017 aa).

Over 1–232 (MPVMKGLLAP…YSIPKAVWDG (232 aa)) the chain is Cytoplasmic. Positions 14-90 (FLDTIATRFD…QRLQKALEGH (77 aa)) constitute a PAS domain. In terms of domain architecture, PAC spans 93–145 (HRAEICFYRKDGSAFWCLLDMMPIKNELGEVVLFLFSFKDISQSGGPGLGSPG). Residues 139-170 (PGLGSPGIHGDNNNHENSLGRRGASSRLRSTR) are disordered. A helical membrane pass occupies residues 233-253 (LILLATFYVAVTVPYNVCFAG). The Extracellular portion of the chain corresponds to 254-262 (DDDTPITSR). A helical transmembrane segment spans residues 263–283 (HTLVSDIAVEMLFILDIILNF). At 284–305 (RTTYVSQSGQVVSAPRSIGLHY) the chain is on the cytoplasmic side. The helical transmembrane segment at 306-326 (LATWFFVDLIAALPFDLLYVF) threads the bilayer. The Extracellular segment spans residues 327–334 (NITVTSLV). The helical; Voltage-sensor transmembrane segment at 335–355 (HLLKTVRLLRLLRLLQKLERY) threads the bilayer. Residues 356-364 (SQCSAVVLT) are Cytoplasmic-facing. The helical transmembrane segment at 365–385 (LLMSVFALLAHWMACVWYVIG) threads the bilayer. The Extracellular segment spans residues 386 to 427 (RREMEANDPLLWDIGWLHELGKRLEEPYVNGSAGGPSRRSAY). A glycan (N-linked (GlcNAc...) asparagine) is linked at Asn415. Positions 428–448 (IAALYFTLSSLTSVGFGNVCA) form an intramembrane region, pore-forming. Positions 440–445 (SVGFGN) match the Selectivity filter motif. The Extracellular segment spans residues 449-454 (NTDAEK). A helical membrane pass occupies residues 455–475 (IFSICTMLIGALMHAVVFGNV). Topologically, residues 476 to 1017 (TAIIQRMYSR…SFQSGSDTFH (542 aa)) are cytoplasmic. A cNMP-binding domain region spans residues 557–621 (LFGAASRGCL…AILGKGDLIG (65 aa)). 2 disordered regions span residues 690-749 (GSEN…PNLS) and 771-870 (LVSS…ELAT). Polar residues predominate over residues 703-726 (PRLSQARSDTLGSSSDKTLPSITE). 2 stretches are compositionally biased toward low complexity: residues 771–786 (LVSS…PALA) and 806–820 (PPQL…FGPP). Positions 873–907 (AEEVKEKVCRLNQEISRLNQEVSQLSRELRQVMGL) form a coiled coil. The interval 972-1017 (SELRSSMVPPFPSEPDPLGPSPVPEASPLTPSLLKHSFQSGSDTFH) is disordered. Pro residues predominate over residues 980 to 996 (PPFPSEPDPLGPSPVPE). Residues 1008 to 1017 (SFQSGSDTFH) show a composition bias toward polar residues.

This sequence belongs to the potassium channel family. H (Eag) (TC 1.A.1.20) subfamily. Kv12.3/KCNH4 sub-subfamily. As to quaternary structure, the potassium channel is probably composed of a homo- or heterotetrameric complex of pore-forming alpha subunits that can associate with modulating beta subunits. In terms of tissue distribution, highly expressed in adult testis, and in adult and embryonic brain. In adult brain found in piriform cortex, olfactory tubercle, cerebral cortex, hippocampus pyramidial cells and dentate gyrus and basal ganglia of caudate/putamen and accumbens nucleus. Detected at intermediate levels in lung, spinal cord, and pituitary.

It is found in the membrane. The catalysed reaction is K(+)(in) = K(+)(out). Functionally, pore-forming (alpha) subunit of a voltage-gated delayed rectifier. Activates at more negative voltages, exhibits fast prepulse-independent activation kinetics and deactivates much more slowly, but shows no inactivation. The sequence is that of Voltage-gated delayed rectifier potassium channel KCNH4 from Rattus norvegicus (Rat).